Here is a 379-residue protein sequence, read N- to C-terminus: Glutamate 5-kinase (379 aa).

Lys-14 lines the ATP pocket. Residues Ser-54, Asp-141, and Asn-153 each coordinate substrate. ATP-binding positions include Thr-173–Asp-174 and Thr-215–Lys-221. In terms of domain architecture, PUA spans Lys-280–Asp-358.

It belongs to the glutamate 5-kinase family.

The protein resides in the cytoplasm. The enzyme catalyses L-glutamate + ATP = L-glutamyl 5-phosphate + ADP. Its pathway is amino-acid biosynthesis; L-proline biosynthesis; L-glutamate 5-semialdehyde from L-glutamate: step 1/2. In terms of biological role, catalyzes the transfer of a phosphate group to glutamate to form L-glutamate 5-phosphate. In Shewanella amazonensis (strain ATCC BAA-1098 / SB2B), this protein is Glutamate 5-kinase.